The chain runs to 238 residues: DNA repair protein RecO (238 aa).

This sequence belongs to the RecO family.

Involved in DNA repair and RecF pathway recombination. This chain is DNA repair protein RecO, found in Anaplasma marginale (strain Florida).